A 1194-amino-acid chain; its full sequence is IQ motif and SEC7 domain-containing protein 3 (1194 aa).

Positions 20 to 56 (AIVQNQQSLIHTQRQRIDELERRLDELSAENRSLWEH) form a coiled coil. Disordered regions lie at residues 62–149 (AQPP…EKER) and 229–272 (GRPS…QQPA). Positions 63–78 (QPPPGLVPPPSAPLPA) are enriched in pro residues. The segment covering 79-92 (PAATAPAATAAQEP) has biased composition (low complexity). The span at 122–133 (PSSRVQTPQSPH) shows a compositional bias: polar residues. The residue at position 255 (S255) is a Phosphoserine. In terms of domain architecture, IQ spans 311 to 340 (SRRAACTIQTAFRQYQLSKNFEKIRNSLLE). Disordered stretches follow at residues 439–471 (SAGQ…QGHS) and 515–610 (PAAV…KSAK). Low complexity-rich tracts occupy residues 561–572 (VAEAVVEEAVAT) and 600–610 (SSSSASTKSAK). Positions 646-839 (TLSTDTLRKR…VGIYERIQQK (194 aa)) constitute an SEC7 domain. The 134-residue stretch at 852–985 (TKVEKSIVGM…LKESIAEVTE (134 aa)) folds into the PH domain. 2 disordered regions span residues 1002–1099 (KTLS…PTPP) and 1137–1175 (SSDS…HQFC). Over residues 1024–1035 (AKREAMAGEKAT) the composition is skewed to basic and acidic residues. Positions 1036 to 1052 (ESSGEVSIHNRLQTFQH) are enriched in polar residues. 2 stretches are compositionally biased toward pro residues: residues 1064-1099 (APSP…PTPP) and 1159-1169 (PPLPPPPPPYN).

This sequence belongs to the BRAG family. As to quaternary structure, interacts with DLG1 and DLG4. Interacts with GPHN. As to expression, expressed in brain. Localized to dendrites, as well as somas of neuronal cells.

Its subcellular location is the cytoplasm. It is found in the postsynaptic density. In terms of biological role, acts as a guanine nucleotide exchange factor (GEF) for ARF1. The chain is IQ motif and SEC7 domain-containing protein 3 (Iqsec3) from Rattus norvegicus (Rat).